Consider the following 109-residue polypeptide: Nucleoid-associated protein NT01EI_1109 (109 aa).

The tract at residues 89-109 (KERMASVSSGMQLPPGFKMPF) is disordered.

It belongs to the YbaB/EbfC family. In terms of assembly, homodimer.

Its subcellular location is the cytoplasm. It is found in the nucleoid. Binds to DNA and alters its conformation. May be involved in regulation of gene expression, nucleoid organization and DNA protection. The chain is Nucleoid-associated protein NT01EI_1109 from Edwardsiella ictaluri (strain 93-146).